Here is a 526-residue protein sequence, read N- to C-terminus: Phosphoenolpyruvate carboxylase (526 aa).

It belongs to the PEPCase type 2 family. Homotetramer. It depends on Mg(2+) as a cofactor.

It carries out the reaction oxaloacetate + phosphate = phosphoenolpyruvate + hydrogencarbonate. In terms of biological role, catalyzes the irreversible beta-carboxylation of phosphoenolpyruvate (PEP) to form oxaloacetate (OAA), a four-carbon dicarboxylic acid source for the tricarboxylic acid cycle. The polypeptide is Phosphoenolpyruvate carboxylase (Methanosarcina mazei (strain ATCC BAA-159 / DSM 3647 / Goe1 / Go1 / JCM 11833 / OCM 88) (Methanosarcina frisia)).